Reading from the N-terminus, the 983-residue chain is UPF0746 protein DDB_G0280809 (983 aa).

A compositionally biased stretch (basic and acidic residues) spans 1-21; sequence MISNKRKEIDTINEHHEKNND. The interval 1-26 is disordered; it reads MISNKRKEIDTINEHHEKNNDDSDGI. Positions 42–76 constitute an SAP domain; sequence SGSTNYRELQIIAKSLGLASNGKKQLVYNRIEGYF. The disordered stretch occupies residues 391 to 413; sequence HTTPTSTSTSTSTSTSTYTSTST. The segment covering 392 to 413 has biased composition (low complexity); that stretch reads TTPTSTSTSTSTSTSTYTSTST.

This sequence belongs to the UPF0746 family.

This Dictyostelium discoideum (Social amoeba) protein is UPF0746 protein DDB_G0280809.